Consider the following 1253-residue polypeptide: Methionine synthase (1253 aa).

A Hcy-binding domain is found at 6-326 (QDEIEAILRK…DHIREIAEAV (321 aa)). C248, C311, and C312 together coordinate Zn(2+). One can recognise a Pterin-binding domain in the interval 359-620 (FVNIGERCNV…IHKDLLQLCE (262 aa)). (6S)-5,6,7,8-tetrahydrofolate contacts are provided by residues 370–372 (GSK), D437, N458, D525, N567, R573, and R579. The region spanning 650–747 (QTDEWRNGSI…FMEKEREEAR (98 aa)) is the B12-binding N-terminal domain. Methylcob(III)alamin is bound by residues E697, 770 to 774 (GDVHD), H773, S818, T822, and A874. Residues 760 to 895 (QGTIVLATVK…DENLKDDYFE (136 aa)) form the B12-binding domain. In terms of domain architecture, AdoMet activation spans 911–1253 (SLKERKYLPL…LGPILGYDTD (343 aa)). S-adenosyl-L-methionine contacts are provided by residues D962, R1160, and 1215-1216 (YF). Phosphothreonine is present on T1252.

This sequence belongs to the vitamin-B12 dependent methionine synthase family. In terms of assembly, monomer. Dimer. Forms a multiprotein complex with MMACHC, MMADHC and MTRR. Requires methylcob(III)alamin as cofactor. It depends on Zn(2+) as a cofactor.

The protein resides in the cytoplasm. The catalysed reaction is (6S)-5-methyl-5,6,7,8-tetrahydrofolate + L-homocysteine = (6S)-5,6,7,8-tetrahydrofolate + L-methionine. It participates in amino-acid biosynthesis; L-methionine biosynthesis via de novo pathway; L-methionine from L-homocysteine (MetH route): step 1/1. Functionally, catalyzes the transfer of a methyl group from methylcob(III)alamin (MeCbl) to homocysteine, yielding enzyme-bound cob(I)alamin and methionine in the cytosol. MeCbl is an active form of cobalamin (vitamin B12) used as a cofactor for methionine biosynthesis. Cob(I)alamin form is regenerated to MeCbl by a transfer of a methyl group from 5-methyltetrahydrofolate. The processing of cobalamin in the cytosol occurs in a multiprotein complex composed of at least MMACHC, MMADHC, MTRR (methionine synthase reductase) and MTR which may contribute to shuttle safely and efficiently cobalamin towards MTR in order to produce methionine. The sequence is that of Methionine synthase (Mtr) from Rattus norvegicus (Rat).